Consider the following 149-residue polypeptide: Hydrogenase expression/formation protein HupT (149 aa).

It belongs to the HupJ family.

In Azotobacter chroococcum mcd 1, this protein is Hydrogenase expression/formation protein HupT (hupT).